A 652-amino-acid polypeptide reads, in one-letter code: Regulator of DNA class I crossover intermediates 1 (652 aa).

Residues 1 to 231 (MNWVGGSRSR…TLFERLNSLG (231 aa)) constitute a DNA-binding region (binds DNA containing a D-loop). 2 disordered regions span residues 363 to 434 (NKTS…NIPS) and 469 to 506 (KISL…EDQI). Positions 377 to 388 (YQREYNKNERND) are enriched in basic and acidic residues. The segment covering 389-401 (LSTSFENDYYPSS) has biased composition (polar residues). The span at 402–417 (SERKEKFENDYQEKTP) shows a compositional bias: basic and acidic residues. The span at 473–498 (DSAQSSRSTSYSPRPTDSCFSSSSDL) shows a compositional bias: low complexity.

Interacts with MSH5. Interacts with TEX11.

Its subcellular location is the chromosome. Functionally, involved in recombination, probably acting by stabilizing recombination intermediates during meiotic crossover formation. Required for normal germline development and fertility. Required for meiotic progression, complete chromosomal synapsis and crossover formation. Binds double-stranded DNA. However, also binds branched DNA molecules, such as those containing a D-loop or Holliday junction structure. Probably not required for formation of DNA double-strand breaks (DSBs). Also binds RNA in an RNA structure-independent manner, with a preference for binding 3'-UTR regions of mRNAs; may stabilize bound RNAs. This is Regulator of DNA class I crossover intermediates 1 from Homo sapiens (Human).